Consider the following 435-residue polypeptide: Membrane-bound ghrelin O-acyltransferase MBOAT4 (435 aa).

The Lumenal portion of the chain corresponds to 1–5 (MDWLQ). The helical transmembrane segment at 6-26 (FFFLHPVSLYQGAAFPFALLF) threads the bilayer. At 27 to 40 (NYLCITESFPTRAR) the chain is on the cytoplasmic side. A helical transmembrane segment spans residues 41–56 (YLFLLAGGGVLALAAM). At 57–59 (GPY) the chain is on the lumenal side. The helical transmembrane segment at 60–76 (ALLIFIPALCAVAMISS) threads the bilayer. At 77–82 (LSPQEV) the chain is on the cytoplasmic side. Residues 83 to 101 (HGLTFFFQMGWQTLCHLGL) traverse the membrane as a helical segment. At 102-120 (HYKEYYLCEPPPVRFYITL) the chain is on the lumenal side. A helical membrane pass occupies residues 121–136 (SSLMLLTQRVTSLSLD). The Cytoplasmic portion of the chain corresponds to 137 to 206 (ISEGKVEAAW…YPSISFWALT (70 aa)). A helical transmembrane segment spans residues 207-227 (WRGLQILGLECLKVALRRVVS). The Lumenal segment spans residues 228 to 240 (AGAGLDDCQRLEC). The helical transmembrane segment at 241–261 (IYIMWSTAGLFKLTYYSHWIL) threads the bilayer. The Cytoplasmic segment spans residues 262–324 (DDSLLHAAGF…KRLVFQRSRR (63 aa)). Active-site residues include asparagine 307 and histidine 338. Residues 325–338 (WPVLQTFAFSAWWH) form a helical membrane-spanning segment. The Lumenal segment spans residues 339-340 (GL). A helical membrane pass occupies residues 341-357 (HPGQVFGFLCWSVMVKA). Over 358 to 376 (DYLIHTFANGCIRSWPLRL) the chain is Cytoplasmic. Residues 377 to 397 (LYRSLTWAHTQIIIAYVMLAV) traverse the membrane as a helical segment. At 398–407 (EGRSFSSLCR) the chain is on the lumenal side. Residues 408–428 (LCCSYNSIFPVTYCLLLFLLA) traverse the membrane as a helical segment. Over 429–435 (RRKHKCN) the chain is Cytoplasmic.

The protein belongs to the membrane-bound acyltransferase family. Monomer. Not glycosylated.

It is found in the endoplasmic reticulum membrane. The catalysed reaction is octanoyl-CoA + L-seryl-[protein] = O-octanoyl-L-seryl-[protein] + CoA. It carries out the reaction decanoyl-CoA + L-seryl-[protein] = O-decanoyl-L-seryl-[protein] + CoA. The enzyme catalyses L-seryl-[protein] + acetyl-CoA = O-acetyl-L-seryl-[protein] + CoA. It catalyses the reaction L-seryl-[protein] + butanoyl-CoA = O-butanoyl-L-seryl-[protein] + CoA. The catalysed reaction is pentanoyl-CoA + L-seryl-[protein] = O-pentanoyl-L-seryl-[protein] + CoA. It carries out the reaction hexanoyl-CoA + L-seryl-[protein] = O-hexanoyl-L-seryl-[protein] + CoA. The enzyme catalyses heptanoyl-CoA + L-seryl-[protein] = O-heptanoyl-L-seryl-[protein] + CoA. It catalyses the reaction nonanoyl-CoA + L-seryl-[protein] = O-nonanoyl-L-seryl-[protein] + CoA. The catalysed reaction is L-seryl-[protein] + dodecanoyl-CoA = O-dodecanoyl-L-seryl-[protein] + CoA. It carries out the reaction L-seryl-[protein] + tetradecanoyl-CoA = O-tetradecanoyl-L-seryl-[protein] + CoA. The enzyme catalyses a fatty acyl-CoA + L-seryl-[protein] = O-fatty acyl-L-seryl-[protein] + CoA. Functionally, catalyzes ghrelin acylation at 'Ser-3' using preferentially octanoyl-CoA, hexanoyl-CoA and decanoyl-CoA as acyl-CoA donors leading to ghrelin activity. In vitro uses also acyl-CoA donors of different lengths from short-chain (C2) to long-chain fatty acids (C16) knowing that acyl-CoA donors from butanoyl-CoA (C4) to dodecanoyl-CoA (C12) are more efficient compared to longer acyl-CoA donors, such as myristoyl-CoA (C14) and palmitoyl-CoA (C16) that are not efficient. The chain is Membrane-bound ghrelin O-acyltransferase MBOAT4 from Rattus norvegicus (Rat).